The primary structure comprises 566 residues: Proline--tRNA ligase (566 aa).

Belongs to the class-II aminoacyl-tRNA synthetase family. ProS type 1 subfamily. As to quaternary structure, homodimer.

It localises to the cytoplasm. It carries out the reaction tRNA(Pro) + L-proline + ATP = L-prolyl-tRNA(Pro) + AMP + diphosphate. Functionally, catalyzes the attachment of proline to tRNA(Pro) in a two-step reaction: proline is first activated by ATP to form Pro-AMP and then transferred to the acceptor end of tRNA(Pro). As ProRS can inadvertently accommodate and process non-cognate amino acids such as alanine and cysteine, to avoid such errors it has two additional distinct editing activities against alanine. One activity is designated as 'pretransfer' editing and involves the tRNA(Pro)-independent hydrolysis of activated Ala-AMP. The other activity is designated 'posttransfer' editing and involves deacylation of mischarged Ala-tRNA(Pro). The misacylated Cys-tRNA(Pro) is not edited by ProRS. In Coxiella burnetii (strain RSA 493 / Nine Mile phase I), this protein is Proline--tRNA ligase.